Here is a 184-residue protein sequence, read N- to C-terminus: RNA 2',3'-cyclic phosphodiesterase (184 aa).

The Proton donor role is filled by H42. 2 short sequence motifs (HXTX) span residues 42–45 and 127–130; these read HFTL and HLTV. H127 (proton acceptor) is an active-site residue.

This sequence belongs to the 2H phosphoesterase superfamily. ThpR family.

It carries out the reaction a 3'-end 2',3'-cyclophospho-ribonucleotide-RNA + H2O = a 3'-end 2'-phospho-ribonucleotide-RNA + H(+). Functionally, hydrolyzes RNA 2',3'-cyclic phosphodiester to an RNA 2'-phosphomonoester. This chain is RNA 2',3'-cyclic phosphodiesterase, found in Methanothermobacter thermautotrophicus (strain ATCC 29096 / DSM 1053 / JCM 10044 / NBRC 100330 / Delta H) (Methanobacterium thermoautotrophicum).